Consider the following 452-residue polypeptide: Methionine aminopeptidase 2 (452 aa).

The segment at 1-91 is disordered; that stretch reads MTGVTGTEDT…KNKKKKKKKI (91 aa). Basic and acidic residues predominate over residues 8-38; sequence EDTKVIESKINELNIDKSKPEKTNKVNKSDD. Positions 39–62 are enriched in acidic residues; it reads VDNDDVDNDDNDDEDNDDDDDEIT. Basic residues predominate over residues 74–91; sequence KKKKKNKNKNKKKKKKKI. H203 serves as a coordination point for substrate. Residues D223, D234, and H305 each coordinate a divalent metal cation. Residue H313 coordinates substrate. A divalent metal cation-binding residues include E338 and E433.

Belongs to the peptidase M24A family. Methionine aminopeptidase eukaryotic type 2 subfamily. Requires Co(2+) as cofactor. Zn(2+) serves as cofactor. It depends on Mn(2+) as a cofactor. The cofactor is Fe(2+).

The protein localises to the cytoplasm. The enzyme catalyses Release of N-terminal amino acids, preferentially methionine, from peptides and arylamides.. Its function is as follows. Cotranslationally removes the N-terminal methionine from nascent proteins. The N-terminal methionine is often cleaved when the second residue in the primary sequence is small and uncharged (Met-Ala-, Cys, Gly, Pro, Ser, Thr, or Val). This chain is Methionine aminopeptidase 2, found in Candida dubliniensis (strain CD36 / ATCC MYA-646 / CBS 7987 / NCPF 3949 / NRRL Y-17841) (Yeast).